Reading from the N-terminus, the 115-residue chain is Probable malate:quinone oxidoreductase (115 aa).

The tract at residues 88-115 (QMPAAAPTATAKPAETPREASPQHDMAL) is disordered. A compositionally biased stretch (low complexity) spans 90–101 (PAAAPTATAKPA). Residues 102-115 (ETPREASPQHDMAL) are compositionally biased toward basic and acidic residues.

It belongs to the MQO family. FAD serves as cofactor.

The enzyme catalyses (S)-malate + a quinone = a quinol + oxaloacetate. Its pathway is carbohydrate metabolism; tricarboxylic acid cycle; oxaloacetate from (S)-malate (quinone route): step 1/1. The sequence is that of Probable malate:quinone oxidoreductase (mqo) from Klebsiella pneumoniae.